The following is an 894-amino-acid chain: Alanine--tRNA ligase (894 aa).

Residues histidine 587, histidine 591, cysteine 691, and histidine 695 each contribute to the Zn(2+) site. Residues 739 to 758 are disordered; it reads AEGDRAAEEAKGRLQEERDA.

It belongs to the class-II aminoacyl-tRNA synthetase family. It depends on Zn(2+) as a cofactor.

Its subcellular location is the cytoplasm. The enzyme catalyses tRNA(Ala) + L-alanine + ATP = L-alanyl-tRNA(Ala) + AMP + diphosphate. Functionally, catalyzes the attachment of alanine to tRNA(Ala) in a two-step reaction: alanine is first activated by ATP to form Ala-AMP and then transferred to the acceptor end of tRNA(Ala). Also edits incorrectly charged Ser-tRNA(Ala) and Gly-tRNA(Ala) via its editing domain. The polypeptide is Alanine--tRNA ligase (Cenarchaeum symbiosum (strain A)).